The chain runs to 430 residues: Ribosomal protein uS12 methylthiotransferase RimO (430 aa).

The region spanning 1–116 (MKIGIKVLGC…IAEAIEKATP (116 aa)) is the MTTase N-terminal domain. The [4Fe-4S] cluster site is built by Cys10, Cys46, Cys79, Cys146, Cys150, and Cys153. The 231-residue stretch at 132–362 (SCNNSFAYVK…LIFQSQIAYE (231 aa)) folds into the Radical SAM core domain. Residues 365–430 (KRFVGKNLNV…DEYDLKGELI (66 aa)) form the TRAM domain.

This sequence belongs to the methylthiotransferase family. RimO subfamily. [4Fe-4S] cluster is required as a cofactor.

The protein localises to the cytoplasm. It catalyses the reaction L-aspartate(89)-[ribosomal protein uS12]-hydrogen + (sulfur carrier)-SH + AH2 + 2 S-adenosyl-L-methionine = 3-methylsulfanyl-L-aspartate(89)-[ribosomal protein uS12]-hydrogen + (sulfur carrier)-H + 5'-deoxyadenosine + L-methionine + A + S-adenosyl-L-homocysteine + 2 H(+). Catalyzes the methylthiolation of an aspartic acid residue of ribosomal protein uS12. This Pseudothermotoga lettingae (strain ATCC BAA-301 / DSM 14385 / NBRC 107922 / TMO) (Thermotoga lettingae) protein is Ribosomal protein uS12 methylthiotransferase RimO.